An 880-amino-acid chain; its full sequence is Alanine--tRNA ligase (880 aa).

4 residues coordinate Zn(2+): His569, His573, Cys671, and His675.

Belongs to the class-II aminoacyl-tRNA synthetase family. As to quaternary structure, homotetramer. Requires Zn(2+) as cofactor.

The protein resides in the cytoplasm. The catalysed reaction is tRNA(Ala) + L-alanine + ATP = L-alanyl-tRNA(Ala) + AMP + diphosphate. Its function is as follows. Catalyzes the attachment of alanine to tRNA(Ala) in a two-step reaction: alanine is first activated by ATP to form Ala-AMP and then transferred to the acceptor end of tRNA(Ala). Also edits incorrectly charged Ser-tRNA(Ala) and Gly-tRNA(Ala) via its editing domain. This Buchnera aphidicola subsp. Baizongia pistaciae (strain Bp) protein is Alanine--tRNA ligase.